A 397-amino-acid polypeptide reads, in one-letter code: Elongation factor Tu (397 aa).

In terms of domain architecture, tr-type G spans 10–206 (KPHVNIGTIG…AVDDSIPEPQ (197 aa)). The tract at residues 19-26 (GHIDHGKT) is G1. A GTP-binding site is contributed by 19 to 26 (GHIDHGKT). T26 contacts Mg(2+). A G2 region spans residues 62-66 (GITIS). The tract at residues 83–86 (DCPG) is G3. GTP is bound by residues 83–87 (DCPGH) and 138–141 (NKAD). A G4 region spans residues 138-141 (NKAD). The segment at 176-178 (SAL) is G5.

This sequence belongs to the TRAFAC class translation factor GTPase superfamily. Classic translation factor GTPase family. EF-Tu/EF-1A subfamily. In terms of assembly, monomer.

Its subcellular location is the cytoplasm. It catalyses the reaction GTP + H2O = GDP + phosphate + H(+). In terms of biological role, GTP hydrolase that promotes the GTP-dependent binding of aminoacyl-tRNA to the A-site of ribosomes during protein biosynthesis. The sequence is that of Elongation factor Tu from Frankia alni (strain DSM 45986 / CECT 9034 / ACN14a).